Consider the following 1272-residue polypeptide: Myosin-binding protein C, cardiac-type (1272 aa).

A disordered region spans residues 95–147; the sequence is KEPEKSEPVAPAEASPAPAASELPAPPVESNQNPEVPPAETQPEEPVDPIGLF. The segment covering 102–117 has biased composition (low complexity); the sequence is PVAPAEASPAPAASEL. Positions 137-252 constitute an Ig-like C2-type 1 domain; it reads PEEPVDPIGL…NLIVNEAPVS (116 aa). S265 is subject to Phosphoserine; by PKA and PKC. T274 carries the phosphothreonine; by PKA and PKC modification. A Phosphoserine; by PKA modification is found at S300. Ig-like C2-type domains follow at residues 359–451, 452–542, 543–640, and 644–763; these read KKST…VKEP, PILI…VQEK, KLEV…FVPR, and PKIH…ADIT. Fibronectin type-III domains lie at 772 to 868 and 870 to 965; these read PPEA…IAPP and EPTH…VQEI. The region spanning 969 to 1057 is the Ig-like C2-type 6 domain; the sequence is PKICVPRHLR…ENMTDTVAIT (89 aa). The Fibronectin type-III 3 domain occupies 1066-1161; the sequence is PPQNIKLADV…TKNPAYIQKT (96 aa). The residue at position 1169 (S1169) is a Phosphoserine; by PKC. One can recognise an Ig-like C2-type 7 domain in the interval 1179–1263; sequence PKFTHPLVNR…VNERGEAEIE (85 aa).

The protein belongs to the immunoglobulin superfamily. MyBP family. Substrate for phosphorylation by PKA and PKC. Reversible phosphorylation appears to modulate contraction. As to expression, expressed specifically in cardiac muscle among adult tissues, but is also expressed transiently in the skeletal muscle at early developmental stages. Isoform Type I is found in embryonic skeletal muscle and isoform Type II is found in both embryonic skeletal and cardiac muscle.

Functionally, thick filament-associated protein located in the crossbridge region of vertebrate striated muscle A bands. In vitro it binds MHC, F-actin and native thin filaments, and modifies the activity of actin-activated myosin ATPase. It may modulate muscle contraction or may play a more structural role. May be involved in the early phase of myofibrillogenesis. The chain is Myosin-binding protein C, cardiac-type (MYBPC3) from Gallus gallus (Chicken).